A 157-amino-acid chain; its full sequence is SsrA-binding protein (157 aa).

A disordered region spans residues 131 to 157; the sequence is KQLHDKRDTEKKRDWSREKGRIMRARG. The span at 132–151 shows a compositional bias: basic and acidic residues; sequence QLHDKRDTEKKRDWSREKGR.

Belongs to the SmpB family.

The protein resides in the cytoplasm. Functionally, required for rescue of stalled ribosomes mediated by trans-translation. Binds to transfer-messenger RNA (tmRNA), required for stable association of tmRNA with ribosomes. tmRNA and SmpB together mimic tRNA shape, replacing the anticodon stem-loop with SmpB. tmRNA is encoded by the ssrA gene; the 2 termini fold to resemble tRNA(Ala) and it encodes a 'tag peptide', a short internal open reading frame. During trans-translation Ala-aminoacylated tmRNA acts like a tRNA, entering the A-site of stalled ribosomes, displacing the stalled mRNA. The ribosome then switches to translate the ORF on the tmRNA; the nascent peptide is terminated with the 'tag peptide' encoded by the tmRNA and targeted for degradation. The ribosome is freed to recommence translation, which seems to be the essential function of trans-translation. In Rhodopseudomonas palustris (strain BisB18), this protein is SsrA-binding protein.